A 256-amino-acid chain; its full sequence is Imidazole glycerol phosphate synthase subunit hisF1 (256 aa).

Residues Asp-11 and Asp-130 contribute to the active site.

This sequence belongs to the HisA/HisF family. In terms of assembly, heterodimer of HisH and HisF.

The protein localises to the cytoplasm. The catalysed reaction is 5-[(5-phospho-1-deoxy-D-ribulos-1-ylimino)methylamino]-1-(5-phospho-beta-D-ribosyl)imidazole-4-carboxamide + L-glutamine = D-erythro-1-(imidazol-4-yl)glycerol 3-phosphate + 5-amino-1-(5-phospho-beta-D-ribosyl)imidazole-4-carboxamide + L-glutamate + H(+). Its pathway is amino-acid biosynthesis; L-histidine biosynthesis; L-histidine from 5-phospho-alpha-D-ribose 1-diphosphate: step 5/9. Functionally, IGPS catalyzes the conversion of PRFAR and glutamine to IGP, AICAR and glutamate. The HisF subunit catalyzes the cyclization activity that produces IGP and AICAR from PRFAR using the ammonia provided by the HisH subunit. The chain is Imidazole glycerol phosphate synthase subunit hisF1 (hisF1) from Parasynechococcus marenigrum (strain WH8102).